Here is a 621-residue protein sequence, read N- to C-terminus: Putative acyltransferase plsB1 (621 aa).

The HXXXXD motif signature appears at H123 to D128.

The protein belongs to the GPAT/DAPAT family.

The protein resides in the cell membrane. The protein is Putative acyltransferase plsB1 (plsB1) of Mycobacterium bovis (strain ATCC BAA-935 / AF2122/97).